We begin with the raw amino-acid sequence, 210 residues long: Small ribosomal subunit protein uS3 (210 aa).

One can recognise a KH type-2 domain in the interval 38–106 (IRAWLKKRLA…EVQINIVEIR (69 aa)).

It belongs to the universal ribosomal protein uS3 family. In terms of assembly, part of the 30S ribosomal subunit. Forms a tight complex with proteins S10 and S14.

In terms of biological role, binds the lower part of the 30S subunit head. Binds mRNA in the 70S ribosome, positioning it for translation. The protein is Small ribosomal subunit protein uS3 of Magnetococcus marinus (strain ATCC BAA-1437 / JCM 17883 / MC-1).